A 174-amino-acid chain; its full sequence is Shikimate kinase 2 (174 aa).

Residue Gly12–Thr17 coordinates ATP. Residues Thr16 and Asp32 each coordinate Mg(2+). Substrate-binding residues include Asp34, Arg58, and Gly79. The tract at residues Gln112–Lys126 is LID domain. Arg120 is a binding site for ATP. A substrate-binding site is contributed by Arg139.

It belongs to the shikimate kinase family. AroL subfamily. Monomer. Requires Mg(2+) as cofactor.

Its subcellular location is the cytoplasm. It catalyses the reaction shikimate + ATP = 3-phosphoshikimate + ADP + H(+). Its pathway is metabolic intermediate biosynthesis; chorismate biosynthesis; chorismate from D-erythrose 4-phosphate and phosphoenolpyruvate: step 5/7. Its function is as follows. Catalyzes the specific phosphorylation of the 3-hydroxyl group of shikimic acid using ATP as a cosubstrate. In Escherichia coli O81 (strain ED1a), this protein is Shikimate kinase 2.